We begin with the raw amino-acid sequence, 688 residues long: UvrABC system protein B (688 aa).

The region spanning 41-429 is the Helicase ATP-binding domain; the sequence is ANFEAGLAKQ…AGEVTELVVR (389 aa). 54-61 contributes to the ATP binding site; sequence GVTGSGKT. The Beta-hairpin signature appears at 107–130; sequence YYDYYQPEAYVPSSDTFIEKDSSI. The Helicase C-terminal domain occupies 446 to 612; that stretch reads QVDDLMSEIH…SVERPISDIM (167 aa). The tract at residues 616 to 646 is disordered; the sequence is REDAAEKKSGKGRSKSRQVAEETPDYRAMKP. Basic and acidic residues predominate over residues 633–645; sequence QVAEETPDYRAMK. Residues 650–685 enclose the UVR domain; sequence AGKLKSLEQKMYQHAKDLEFEAAAQIRDQIQKLKTA.

The protein belongs to the UvrB family. As to quaternary structure, forms a heterotetramer with UvrA during the search for lesions. Interacts with UvrC in an incision complex.

Its subcellular location is the cytoplasm. The UvrABC repair system catalyzes the recognition and processing of DNA lesions. A damage recognition complex composed of 2 UvrA and 2 UvrB subunits scans DNA for abnormalities. Upon binding of the UvrA(2)B(2) complex to a putative damaged site, the DNA wraps around one UvrB monomer. DNA wrap is dependent on ATP binding by UvrB and probably causes local melting of the DNA helix, facilitating insertion of UvrB beta-hairpin between the DNA strands. Then UvrB probes one DNA strand for the presence of a lesion. If a lesion is found the UvrA subunits dissociate and the UvrB-DNA preincision complex is formed. This complex is subsequently bound by UvrC and the second UvrB is released. If no lesion is found, the DNA wraps around the other UvrB subunit that will check the other stand for damage. The protein is UvrABC system protein B of Xanthomonas oryzae pv. oryzae (strain KACC10331 / KXO85).